The primary structure comprises 504 residues: Maturase K (504 aa).

Belongs to the intron maturase 2 family. MatK subfamily.

The protein localises to the plastid. The protein resides in the chloroplast. In terms of biological role, usually encoded in the trnK tRNA gene intron. Probably assists in splicing its own and other chloroplast group II introns. This Eichhornia crassipes (Water hyacinth) protein is Maturase K.